A 217-amino-acid polypeptide reads, in one-letter code: MPETEKPLFGHPWIFIRGVPSLNFLPPEGPLEVAFAGRSNVGKSSLINALVGQKGLARTSNTPGRTQELNYFVPDGYSGESGDMPPMAIVDMPGYGYAQAPKEQVDKWTKLVFDYLRGRATLKRVYVLIDSRHGIKKNDDDVLDLLDKAAVSYQIVLTKTDKIKAPAVPKLLAETAEKIRKRPAAYPGVLSTSSEKGDGLDDLRQAIGETVGVARWK.

Residues 29–213 form the EngB-type G domain; the sequence is GPLEVAFAGR…RQAIGETVGV (185 aa). Residues 37–44, 64–68, 91–94, 158–161, and 192–194 each bind GTP; these read GRSNVGKS, GRTQE, DMPG, TKTD, and TSS. Mg(2+) contacts are provided by Ser-44 and Thr-66.

This sequence belongs to the TRAFAC class TrmE-Era-EngA-EngB-Septin-like GTPase superfamily. EngB GTPase family. It depends on Mg(2+) as a cofactor.

Functionally, necessary for normal cell division and for the maintenance of normal septation. The polypeptide is Probable GTP-binding protein EngB (Rhizobium leguminosarum bv. trifolii (strain WSM2304)).